The chain runs to 70 residues: Cold shock-like protein CspG (70 aa).

The CSD domain occupies 7 to 67; sequence GLVKWFNEEK…GQKGLQAANV (61 aa).

The protein localises to the cytoplasm. The sequence is that of Cold shock-like protein CspG (cspG) from Shewanella violacea (strain JCM 10179 / CIP 106290 / LMG 19151 / DSS12).